Reading from the N-terminus, the 185-residue chain is Crossover junction endodeoxyribonuclease RuvC (185 aa).

Residues aspartate 7, glutamate 66, and aspartate 137 contribute to the active site. The Mg(2+) site is built by aspartate 7, glutamate 66, and aspartate 137.

The protein belongs to the RuvC family. As to quaternary structure, homodimer which binds Holliday junction (HJ) DNA. The HJ becomes 2-fold symmetrical on binding to RuvC with unstacked arms; it has a different conformation from HJ DNA in complex with RuvA. In the full resolvosome a probable DNA-RuvA(4)-RuvB(12)-RuvC(2) complex forms which resolves the HJ. It depends on Mg(2+) as a cofactor.

It localises to the cytoplasm. The catalysed reaction is Endonucleolytic cleavage at a junction such as a reciprocal single-stranded crossover between two homologous DNA duplexes (Holliday junction).. Functionally, the RuvA-RuvB-RuvC complex processes Holliday junction (HJ) DNA during genetic recombination and DNA repair. Endonuclease that resolves HJ intermediates. Cleaves cruciform DNA by making single-stranded nicks across the HJ at symmetrical positions within the homologous arms, yielding a 5'-phosphate and a 3'-hydroxyl group; requires a central core of homology in the junction. The consensus cleavage sequence is 5'-(A/T)TT(C/G)-3'. Cleavage occurs on the 3'-side of the TT dinucleotide at the point of strand exchange. HJ branch migration catalyzed by RuvA-RuvB allows RuvC to scan DNA until it finds its consensus sequence, where it cleaves and resolves the cruciform DNA. This is Crossover junction endodeoxyribonuclease RuvC from Anaeromyxobacter dehalogenans (strain 2CP-C).